A 127-amino-acid chain; its full sequence is Holo-[acyl-carrier-protein] synthase (127 aa).

Mg(2+) is bound by residues Asp-8 and Glu-60.

This sequence belongs to the P-Pant transferase superfamily. AcpS family. Mg(2+) serves as cofactor.

It localises to the cytoplasm. It catalyses the reaction apo-[ACP] + CoA = holo-[ACP] + adenosine 3',5'-bisphosphate + H(+). Functionally, transfers the 4'-phosphopantetheine moiety from coenzyme A to a Ser of acyl-carrier-protein. The protein is Holo-[acyl-carrier-protein] synthase of Marinomonas sp. (strain MWYL1).